The chain runs to 648 residues: Fidgetin-like protein 2 (648 aa).

Residues 1–36 (MHWTPEHAQPLNQWPEQHLDVSSTTPSPAHKLELPP) form a disordered region. The span at 10-27 (PLNQWPEQHLDVSSTTPS) shows a compositional bias: polar residues. ATP-binding positions include Ala-394 and 434 to 439 (GCGKAL).

This sequence belongs to the AAA ATPase family. It depends on Mg(2+) as a cofactor.

The protein resides in the cytoplasm. It is found in the cell cortex. The catalysed reaction is ATP + H2O = ADP + phosphate + H(+). Its function is as follows. Microtubule-severing enzyme that negatively regulates cell migration and wound healing. In migrating cells, targets dynamic microtubules (MTs) at the leading edge and severs them, thereby suppressing motility. Microtubule severing releases ARHGEF2 which activates RHOA, which in turn regulates focal ahesion turnover via focal adhesion kinase, as opposed to F-actin polymerization, to suppress cell motility. Negative regulator of axon regeneration that suppresses axonal growth by selectively severing dynamic MTs in the distal axon shaft and growth cone. Contributes to proper cell branching during endothelial and neuronal development. The polypeptide is Fidgetin-like protein 2 (Fignl2) (Rattus norvegicus (Rat)).